We begin with the raw amino-acid sequence, 786 residues long: MLERTLRVLEYNKVKEQLLEHTASSLGRDKVKHLVPSTDFEEIVEMQDTTDEAAKVIRLKGSAPLGGITDIRSNVKRAKIGSMLSPNELLDIANTMYGSRNMKRFIEDMADNGVELPILETHVAQIVSLYDLEKKITNCIGDGGEVVDSASDKLRGIRTQIRTAESRIREKLENMTRSSNAQKMLSDSIVTIRNERYVIPVKQEYRGVYGGIVHDQSASGQTLFIEPQVIVELNNALQEARVKEKQEIERILLMLTEEVAVEADIVLSNVEVVANLDFIFAKAFYAKRIKATKPIVNNERYMDLRQARHPLIDPEIIVPNNIMLGKDFTTIVITGPNTGGKTVTLKTVGICVLMAQSGLHIPVMDESEICVFKNIFADIGDEQSIEQSLSTFSSHMVNIVDILEKADFESLVLFDELGAGTDPQEGAALAISILDEVCNRGARVVATTHYPELKAYGYNREQVINASVEFDVNTLSPTYKLLIGVPGRSNAFEISKRLGLSDRVIEQARNHISTDTNKIENMIAKLEESQKNAERDWNEAEALRKQSEKLHRELQRQIIEFNEDRDERLLKAQKEGEEKVEAAKKEAEGIIQELRQLRKAQLANVKDHELIEAKSRLEGAAPELVKKQKVNVKNTAPKQQLRAGDEVKVLTFGQKGQLLEKVSDTEWSVQIGILKMKVKESNMEYINTPKQTEKKAVATVKGRDYHVSLELDLRGERFENAMARVEKYLDDAQLASYPRVSIIHGKGTGALRQGVQDYLKKHRGVKTFRYGDMGEGGLGVTVVELK.

335 to 342 serves as a coordination point for ATP; sequence GPNTGGKT. In terms of domain architecture, Smr spans 711-786; the sequence is LDLRGERFEN…GLGVTVVELK (76 aa).

This sequence belongs to the DNA mismatch repair MutS family. MutS2 subfamily. Homodimer. Binds to stalled ribosomes, contacting rRNA.

Endonuclease that is involved in the suppression of homologous recombination and thus may have a key role in the control of bacterial genetic diversity. Functionally, acts as a ribosome collision sensor, splitting the ribosome into its 2 subunits. Detects stalled/collided 70S ribosomes which it binds and splits by an ATP-hydrolysis driven conformational change. Acts upstream of the ribosome quality control system (RQC), a ribosome-associated complex that mediates the extraction of incompletely synthesized nascent chains from stalled ribosomes and their subsequent degradation. Probably generates substrates for RQC. The polypeptide is Endonuclease MutS2 (Bacillus cereus (strain B4264)).